Consider the following 256-residue polypeptide: Triosephosphate isomerase (256 aa).

Substrate is bound at residue 9–11; the sequence is NWK. Residue His95 is the Electrophile of the active site. Residue Glu167 is the Proton acceptor of the active site. Substrate-binding positions include Gly173, Ser212, and 233-234; that span reads GG.

It belongs to the triosephosphate isomerase family. In terms of assembly, homodimer.

It is found in the cytoplasm. The enzyme catalyses D-glyceraldehyde 3-phosphate = dihydroxyacetone phosphate. It participates in carbohydrate biosynthesis; gluconeogenesis. Its pathway is carbohydrate degradation; glycolysis; D-glyceraldehyde 3-phosphate from glycerone phosphate: step 1/1. Functionally, involved in the gluconeogenesis. Catalyzes stereospecifically the conversion of dihydroxyacetone phosphate (DHAP) to D-glyceraldehyde-3-phosphate (G3P). This is Triosephosphate isomerase from Proteus mirabilis (strain HI4320).